A 947-amino-acid chain; its full sequence is Protein NETWORKED 2D (947 aa).

Residues 10 to 90 form the NAB domain; it reads YSWWWASHIR…ERYDHISTEL (81 aa). Coiled-coil stretches lie at residues 176–205, 247–342, and 375–433; these read KPEA…SSYE, MTET…HFES, and TALI…VLDK. Disordered regions lie at residues 455-555 and 580-620; these read NLHE…DKTD and EKQG…GEPD. Residues 474–514 show a composition bias toward basic and acidic residues; sequence PQKDLEGEKRTLDISEEIKEHQKETGEEKKEAPVKSVKFEQ. Over residues 525–536 the composition is skewed to polar residues; the sequence is TIPSTNPDTVLE. Composition is skewed to basic and acidic residues over residues 537–555, 580–589, and 610–620; these read STEK…DKTD, EKQGESDKID, and EDQKEKEGEPD. 2 coiled-coil regions span residues 645 to 684 and 744 to 773; these read RNFK…LLQK and GQIQ…DGSS.

It belongs to the NET family.

In terms of biological role, plant-specific actin binding protein. May be part of a membrane-cytoskeletal adapter complex. This chain is Protein NETWORKED 2D, found in Arabidopsis thaliana (Mouse-ear cress).